Consider the following 357-residue polypeptide: Chorismate synthase (357 aa).

Residues arginine 48 and arginine 54 each coordinate NADP(+). Residues 125-127 (RSS), 238-239 (NA), glycine 278, 293-297 (KPTSS), and arginine 319 each bind FMN.

Belongs to the chorismate synthase family. Homotetramer. Requires FMNH2 as cofactor.

It catalyses the reaction 5-O-(1-carboxyvinyl)-3-phosphoshikimate = chorismate + phosphate. It functions in the pathway metabolic intermediate biosynthesis; chorismate biosynthesis; chorismate from D-erythrose 4-phosphate and phosphoenolpyruvate: step 7/7. In terms of biological role, catalyzes the anti-1,4-elimination of the C-3 phosphate and the C-6 proR hydrogen from 5-enolpyruvylshikimate-3-phosphate (EPSP) to yield chorismate, which is the branch point compound that serves as the starting substrate for the three terminal pathways of aromatic amino acid biosynthesis. This reaction introduces a second double bond into the aromatic ring system. This Blochmanniella floridana protein is Chorismate synthase.